The sequence spans 364 residues: 4-hydroxy-3-methylbut-2-en-1-yl diphosphate synthase (flavodoxin) (364 aa).

[4Fe-4S] cluster contacts are provided by cysteine 268, cysteine 271, cysteine 303, and glutamate 310.

The protein belongs to the IspG family. Requires [4Fe-4S] cluster as cofactor.

It catalyses the reaction (2E)-4-hydroxy-3-methylbut-2-enyl diphosphate + oxidized [flavodoxin] + H2O + 2 H(+) = 2-C-methyl-D-erythritol 2,4-cyclic diphosphate + reduced [flavodoxin]. It functions in the pathway isoprenoid biosynthesis; isopentenyl diphosphate biosynthesis via DXP pathway; isopentenyl diphosphate from 1-deoxy-D-xylulose 5-phosphate: step 5/6. Functionally, converts 2C-methyl-D-erythritol 2,4-cyclodiphosphate (ME-2,4cPP) into 1-hydroxy-2-methyl-2-(E)-butenyl 4-diphosphate. In Anoxybacillus flavithermus (strain DSM 21510 / WK1), this protein is 4-hydroxy-3-methylbut-2-en-1-yl diphosphate synthase (flavodoxin).